The primary structure comprises 60 residues: Metallothionein (60 aa).

Residues 1–28 form a beta region; it reads MDPCECSKTGNCTCGGSCTCKNCSCTSC. 20 residues coordinate a divalent metal cation: Cys4, Cys6, Cys12, Cys14, Cys18, Cys20, Cys23, Cys25, Cys28, Cys32, Cys33, Cys35, Cys36, Cys40, Cys43, Cys47, Cys49, Cys54, Cys58, and Cys59. The tract at residues 29 to 60 is alpha; that stretch reads KKSCCSCCPSGCSKCASGCVCKGKTCDTSCCQ.

It belongs to the metallothionein superfamily. Type 1 family.

Metallothioneins have a high content of cysteine residues that bind various heavy metals. In Gobiomorphus cotidianus (New Zealand common bully), this protein is Metallothionein (mt).